The chain runs to 305 residues: UDP-N-acetylenolpyruvoylglucosamine reductase 2 (305 aa).

Residues 33–197 (VGGKADVFVA…LEARFELEEG (165 aa)) form the FAD-binding PCMH-type domain. Arg-176 is a catalytic residue. Ser-226 serves as the catalytic Proton donor. Glu-296 is an active-site residue.

The protein belongs to the MurB family. Requires FAD as cofactor.

It localises to the cytoplasm. It catalyses the reaction UDP-N-acetyl-alpha-D-muramate + NADP(+) = UDP-N-acetyl-3-O-(1-carboxyvinyl)-alpha-D-glucosamine + NADPH + H(+). It participates in cell wall biogenesis; peptidoglycan biosynthesis. In terms of biological role, cell wall formation. The polypeptide is UDP-N-acetylenolpyruvoylglucosamine reductase 2 (Bacillus cereus (strain ATCC 10987 / NRS 248)).